Here is a 284-residue protein sequence, read N- to C-terminus: Proton-translocating ferredoxin:NAD(+) oxidoreductase complex subunit B (284 aa).

Residues 1-26 (MNTVIMILVVMTIIGLIFGLVLAYVN) are hydrophobic. Residues 32 to 92 (EVNPLVDLVE…AEQVAKLTGK (61 aa)) enclose the 4Fe-4S domain. [4Fe-4S] cluster contacts are provided by Cys-49, Cys-52, Cys-57, Cys-75, Cys-138, Cys-142, Cys-148, Cys-152, Cys-172, Cys-175, Cys-178, Cys-182, Cys-217, Cys-220, Cys-223, Cys-227, Cys-246, Cys-249, Cys-254, and Cys-258. 4 4Fe-4S ferredoxin-type domains span residues 133–162 (GGPKACKYGCLGFGTCVKSCPFGAMAMGSN), 163–192 (GLPIIDTDICTGCGTCVSACPKQVLGFRPV), 206–237 (GGAVRKACSVGCLGCGLCAKNCPNDAIKVENN), and 239–269 (AVVDQSICASCSEATCLAKCPTGAIKAIVSG).

The protein belongs to the 4Fe4S bacterial-type ferredoxin family. RnfB subfamily. In terms of assembly, the complex is composed of six subunits: RnfA, RnfB, RnfC, RnfD, RnfE and RnfG. The cofactor is [4Fe-4S] cluster.

The protein resides in the cell membrane. Its function is as follows. Part of a membrane-bound complex that couples electron transfer with translocation of ions across the membrane. Couples electron transfer from reduced ferredoxin to NAD(+) with translocation of H(+) out of the cell. Essential for energy conservation during autotrophic growth. Contributes to ATP synthesis during heterotrophic growth. This Clostridium ljungdahlii (strain ATCC 55383 / DSM 13528 / PETC) protein is Proton-translocating ferredoxin:NAD(+) oxidoreductase complex subunit B.